We begin with the raw amino-acid sequence, 377 residues long: Guanine nucleotide-binding protein subunit beta-2 (377 aa).

WD repeat units follow at residues 63–93 (GHTG…IVWN), 105–135 (LPCA…SIFN), 154–185 (GHKG…VLWD), 202–233 (GHTA…RLWD), 246–276 (GHEG…RLFD), 293–323 (GDIP…YVWD), and 339–369 (SHEG…KIWA).

It belongs to the WD repeat G protein beta family. In terms of assembly, g proteins are composed of 3 units, alpha, beta and gamma.

Its function is as follows. Guanine nucleotide-binding proteins (G proteins) are involved as a modulator or transducer in various transmembrane signaling systems. The beta and gamma chains are required for the GTPase activity, for replacement of GDP by GTP, and for G protein-effector interaction. The chain is Guanine nucleotide-binding protein subunit beta-2 from Nicotiana tabacum (Common tobacco).